Consider the following 598-residue polypeptide: Aspartate--tRNA(Asp/Asn) ligase (598 aa).

Residue glutamate 170 coordinates L-aspartate. Residues 194-197 (QLFK) form an aspartate region. Arginine 216 contributes to the L-aspartate binding site. ATP-binding positions include 216-218 (RDE) and glutamine 225. Histidine 448 lines the L-aspartate pocket. Residue glutamate 482 coordinates ATP. Arginine 489 contacts L-aspartate. 534-537 (GWDR) serves as a coordination point for ATP. Positions 558 to 598 (GGGVDPLTDAPAPITPQQRKESGIDAKPREDKPKEDAKSKA) are disordered. A compositionally biased stretch (basic and acidic residues) spans 575–598 (QRKESGIDAKPREDKPKEDAKSKA).

The protein belongs to the class-II aminoacyl-tRNA synthetase family. Type 1 subfamily. As to quaternary structure, homodimer.

Its subcellular location is the cytoplasm. It carries out the reaction tRNA(Asx) + L-aspartate + ATP = L-aspartyl-tRNA(Asx) + AMP + diphosphate. Functionally, aspartyl-tRNA synthetase with relaxed tRNA specificity since it is able to aspartylate not only its cognate tRNA(Asp) but also tRNA(Asn). Reaction proceeds in two steps: L-aspartate is first activated by ATP to form Asp-AMP and then transferred to the acceptor end of tRNA(Asp/Asn). This chain is Aspartate--tRNA(Asp/Asn) ligase, found in Mycolicibacterium smegmatis (strain ATCC 700084 / mc(2)155) (Mycobacterium smegmatis).